The sequence spans 205 residues: G-protein coupled receptor (205 aa).

Transmembrane regions (helical) follow at residues 40–60, 71–91, 107–127, 151–171, and 185–205; these read GITLTASVPMIIIVITTMILY, FYVITLFASDFVLMWCVFFMT, LVYFIYHAVCSYSISMLAIIA, IGILLLASSMCAIPTALFVQI, and LSSPKAYELFLAVKIVFSFIW. Residues Cys105 and Cys181 are joined by a disulfide bond.

This sequence belongs to the G-protein coupled receptor 1 family.

The protein resides in the host membrane. The protein is G-protein coupled receptor (U12) of Human herpesvirus 6B (strain Z29) (HHV-6 variant B).